Reading from the N-terminus, the 388-residue chain is Probable peptidoglycan glycosyltransferase FtsW (388 aa).

Residues 1–19 (MMSPSTSAPHNQPIQPELD) lie on the Cytoplasmic side of the membrane. A helical transmembrane segment spans residues 20-40 (VLLVSTVLLLLGLGLVMVYSA). The Periplasmic segment spans residues 41-55 (SIAIAEAKFGEGSSY). The chain crosses the membrane as a helical span at residues 56–76 (YFLARQASYILAGIAVGIGCF). The Cytoplasmic portion of the chain corresponds to 77–89 (RIPLRWWQAYSHY). Residues 90–110 (LLGLGILLLLVVLIPGISHEI) traverse the membrane as a helical segment. Residues 111–116 (NGSRRW) lie on the Periplasmic side of the membrane. The chain crosses the membrane as a helical span at residues 117-137 (IPLGITSFQPSELMKLIILIF). Residues 138–151 (TADYVVRKAAFKDH) are Cytoplasmic-facing. Residues 152–172 (FFKGFLPILALLTIVSLLLLM) traverse the membrane as a helical segment. Over 173–175 (EPD) the chain is Periplasmic. A run of 2 helical transmembrane segments spans residues 176–196 (LGAT…NGMS) and 197–217 (LKMF…LIII). Residues 218 to 284 (EPYRMDRINA…DFMFAVLAEE (67 aa)) lie on the Periplasmic side of the membrane. The helical transmembrane segment at 285–305 (LGFAGVVTVISLFFFLLVRIF) threads the bilayer. Residues 306 to 324 (KVGRTAARLGDQFGSLVAQ) lie on the Cytoplasmic side of the membrane. A helical membrane pass occupies residues 325 to 345 (GIGVWLGLQAFINMGVNMGLL). Residues 346 to 351 (PTKGLT) are Periplasmic-facing. The chain crosses the membrane as a helical span at residues 352–372 (LPFMSYGGSSIVINSIAIAIL). At 373–388 (LRIDWENRLKRRGLNA) the chain is on the cytoplasmic side.

The protein belongs to the SEDS family. FtsW subfamily.

The protein resides in the cell inner membrane. The catalysed reaction is [GlcNAc-(1-&gt;4)-Mur2Ac(oyl-L-Ala-gamma-D-Glu-L-Lys-D-Ala-D-Ala)](n)-di-trans,octa-cis-undecaprenyl diphosphate + beta-D-GlcNAc-(1-&gt;4)-Mur2Ac(oyl-L-Ala-gamma-D-Glu-L-Lys-D-Ala-D-Ala)-di-trans,octa-cis-undecaprenyl diphosphate = [GlcNAc-(1-&gt;4)-Mur2Ac(oyl-L-Ala-gamma-D-Glu-L-Lys-D-Ala-D-Ala)](n+1)-di-trans,octa-cis-undecaprenyl diphosphate + di-trans,octa-cis-undecaprenyl diphosphate + H(+). It functions in the pathway cell wall biogenesis; peptidoglycan biosynthesis. Its function is as follows. Peptidoglycan polymerase that is essential for cell division. The protein is Probable peptidoglycan glycosyltransferase FtsW of Nitrosomonas europaea (strain ATCC 19718 / CIP 103999 / KCTC 2705 / NBRC 14298).